The sequence spans 407 residues: Snake venom metalloproteinase ACLH (407 aa).

The first 20 residues, 1–20 (MIQVLLVTLCLAAFPYQGSS), serve as a signal peptide directing secretion. Residues 21-187 (IILESGNVND…PIKKASQLNL (167 aa)) constitute a propeptide that is removed on maturation. One can recognise a Peptidase M12B domain in the interval 193 to 389 (RYVELVTVVD…ENPQCILNKP (197 aa)). Ca(2+) contacts are provided by Glu-196 and Asp-280. Intrachain disulfides connect Cys-304–Cys-384, Cys-344–Cys-368, and Cys-346–Cys-351. Residue His-329 coordinates Zn(2+). The active site involves Glu-330. Zn(2+) contacts are provided by His-333 and His-339. A glycan (N-linked (GlcNAc...) asparagine) is linked at Asn-367. Ca(2+) is bound by residues Cys-384 and Asn-387.

Belongs to the venom metalloproteinase (M12B) family. P-I subfamily. In terms of assembly, monomer. Zn(2+) serves as cofactor. In terms of processing, contains sialic acid terminally alpha(2-6)-linked to galactose in a complex N-glycan chain. In terms of tissue distribution, expressed by the venom gland.

Its subcellular location is the secreted. Functionally, this zinc hemorrhagic metalloproteinase has fibrino(geno)lytic activities. It causes hemorrhage and has myonecrotic activity on both fiber types I and II. The recombinant enzyme, without post-translational modifications, also has proteolytic activity, but does not show any hemorrhagic activity. In Agkistrodon contortrix laticinctus (Broad-banded copperhead), this protein is Snake venom metalloproteinase ACLH.